The primary structure comprises 98 residues: Large ribosomal subunit protein uL23 (98 aa).

The protein belongs to the universal ribosomal protein uL23 family. Part of the 50S ribosomal subunit. Contacts protein L29, and trigger factor when it is bound to the ribosome.

One of the early assembly proteins it binds 23S rRNA. One of the proteins that surrounds the polypeptide exit tunnel on the outside of the ribosome. Forms the main docking site for trigger factor binding to the ribosome. The protein is Large ribosomal subunit protein uL23 of Rickettsia felis (strain ATCC VR-1525 / URRWXCal2) (Rickettsia azadi).